We begin with the raw amino-acid sequence, 215 residues long: Protein Syd (215 aa).

This sequence belongs to the Syd family.

The protein resides in the cell inner membrane. Its function is as follows. Interacts with the SecY protein in vivo. May bind preferentially to an uncomplexed state of SecY, thus functioning either as a chelating agent for excess SecY in the cell or as a regulatory factor that negatively controls the translocase function. This is Protein Syd from Shewanella amazonensis (strain ATCC BAA-1098 / SB2B).